The following is a 524-amino-acid chain: Ribonuclease Y (524 aa).

A helical transmembrane segment spans residues 7–27 (LGGLLTGIVIAIIASIIASVI). The KH domain occupies 214–299 (TVSVVPLPND…EMVEKARKEV (86 aa)). One can recognise an HD domain in the interval 340–433 (VLSHSIEVAR…VQAADSISAA (94 aa)).

The protein belongs to the RNase Y family.

The protein resides in the cell membrane. Endoribonuclease that initiates mRNA decay. The chain is Ribonuclease Y from Acetivibrio thermocellus (strain ATCC 27405 / DSM 1237 / JCM 9322 / NBRC 103400 / NCIMB 10682 / NRRL B-4536 / VPI 7372) (Clostridium thermocellum).